Consider the following 470-residue polypeptide: Glutamate--tRNA ligase (470 aa).

Residues 12-22 (PSPTGIFHVGG) carry the 'HIGH' region motif. Zn(2+)-binding residues include Cys103, Cys105, Cys125, and Asp127. The short motif at 236–240 (KLSKR) is the 'KMSKS' region element. Residue Lys239 coordinates ATP.

Belongs to the class-I aminoacyl-tRNA synthetase family. Glutamate--tRNA ligase type 1 subfamily. In terms of assembly, monomer. Requires Zn(2+) as cofactor.

The protein localises to the cytoplasm. It carries out the reaction tRNA(Glu) + L-glutamate + ATP = L-glutamyl-tRNA(Glu) + AMP + diphosphate. Functionally, catalyzes the attachment of glutamate to tRNA(Glu) in a two-step reaction: glutamate is first activated by ATP to form Glu-AMP and then transferred to the acceptor end of tRNA(Glu). In Frankia casuarinae (strain DSM 45818 / CECT 9043 / HFP020203 / CcI3), this protein is Glutamate--tRNA ligase.